Reading from the N-terminus, the 313-residue chain is MNLHQFRFVREAVRQNFNLTEAAKALYTSQPGVSKAIIELEDELGVEIFTRHGKRVRSLTEPGRIILASVERILQEVESLKRVGKDYAAQDQGNLTIAATHTQARYSLPAAIAEFKKRFPKVHLSILQGSPTQVAEMVIHDQADLAIATEAISDYKELVSLPCFQWHHAAVVPADHPLLERKPVTLDDLAQYPLITYDDAFAGRKKINHAFALRGLSPDIVLEAIDADVIKTYVELGLGVGIMADIAFNPERDRGLRLIPVGHLFGSNVTRVALKQGAYLRSYVYTLVELLSPTLNRKLIEQALKGEAESYEL.

The region spanning methionine 1–leucine 59 is the HTH lysR-type domain. Positions leucine 19 to isoleucine 38 form a DNA-binding region, H-T-H motif.

It belongs to the LysR transcriptional regulatory family.

In terms of biological role, transcriptional regulator preferentially involved in the control of sulfate transport and reduction. Binds to DNA at target promoter regions. This chain is HTH-type transcriptional regulator CysB, found in Burkholderia cenocepacia (strain ATCC BAA-245 / DSM 16553 / LMG 16656 / NCTC 13227 / J2315 / CF5610) (Burkholderia cepacia (strain J2315)).